The sequence spans 447 residues: Rab GDP dissociation inhibitor alpha (447 aa).

The protein belongs to the Rab GDI family. Interacts with RHOH. Interacts with the non-phosphorylated forms of RAB1A, RAB3A, RAB5A, RAB5B, RAB5C, RAB8A, RAB8B, RAB10, RAB12, RAB35, and RAB43. In terms of tissue distribution, brain; predominant in neural and sensory tissues.

It localises to the cytoplasm. It is found in the golgi apparatus. The protein resides in the trans-Golgi network. In terms of biological role, regulates the GDP/GTP exchange reaction of most Rab proteins by inhibiting the dissociation of GDP from them, and the subsequent binding of GTP to them. Promotes the dissociation of GDP-bound Rab proteins from the membrane and inhibits their activation. Promotes the dissociation of RAB1A, RAB3A, RAB5A and RAB10 from membranes. This is Rab GDP dissociation inhibitor alpha (GDI1) from Homo sapiens (Human).